The following is a 342-amino-acid chain: Elongation factor Ts (342 aa).

The tract at residues 79 to 82 (TDFV) is involved in Mg(2+) ion dislocation from EF-Tu.

Belongs to the EF-Ts family.

The protein resides in the cytoplasm. In terms of biological role, associates with the EF-Tu.GDP complex and induces the exchange of GDP to GTP. It remains bound to the aminoacyl-tRNA.EF-Tu.GTP complex up to the GTP hydrolysis stage on the ribosome. In Lactococcus lactis subsp. lactis (strain IL1403) (Streptococcus lactis), this protein is Elongation factor Ts (tsf).